The chain runs to 122 residues: Large ribosomal subunit protein eL34 (122 aa).

It belongs to the eukaryotic ribosomal protein eL34 family. In terms of assembly, component of the large ribosomal subunit. Mature ribosomes consist of a small (40S) and a large (60S) subunit. The 40S subunit contains about 32 different proteins and 1 molecule of RNA (18S). The 60S subunit contains 45 different proteins and 3 molecules of RNA (25S, 5.8S and 5S).

Its subcellular location is the cytoplasm. In terms of biological role, component of the ribosome, a large ribonucleoprotein complex responsible for the synthesis of proteins in the cell. The small ribosomal subunit (SSU) binds messenger RNAs (mRNAs) and translates the encoded message by selecting cognate aminoacyl-transfer RNA (tRNA) molecules. The large subunit (LSU) contains the ribosomal catalytic site termed the peptidyl transferase center (PTC), which catalyzes the formation of peptide bonds, thereby polymerizing the amino acids delivered by tRNAs into a polypeptide chain. The nascent polypeptides leave the ribosome through a tunnel in the LSU and interact with protein factors that function in enzymatic processing, targeting, and the membrane insertion of nascent chains at the exit of the ribosomal tunnel. In Candida albicans (strain SC5314 / ATCC MYA-2876) (Yeast), this protein is Large ribosomal subunit protein eL34.